Consider the following 173-residue polypeptide: Superoxide dismutase [Cu-Zn] (173 aa).

The N-terminal stretch at 1–19 (MKRFSLAILALVVATGAQA) is a signal peptide. Cu cation-binding residues include His-67, His-69, and His-92. Positions 72 to 113 (GSCQPATKDGKASAAESAGGHLDPQNTGKHEGPEGAGHLGDL) are disordered. Cys-74 and Cys-169 are disulfide-bonded. His-92, His-101, His-109, and Asp-112 together coordinate Zn(2+). His-147 is a Cu cation binding site.

This sequence belongs to the Cu-Zn superoxide dismutase family. Monomer. Cu cation serves as cofactor. It depends on Zn(2+) as a cofactor.

The protein localises to the periplasm. The catalysed reaction is 2 superoxide + 2 H(+) = H2O2 + O2. Functionally, destroys radicals which are normally produced within the cells and which are toxic to biological systems. The protein is Superoxide dismutase [Cu-Zn] (sodC) of Escherichia coli O157:H7.